We begin with the raw amino-acid sequence, 363 residues long: Type-2 angiotensin II receptor (363 aa).

Over 1–45 the chain is Extracellular; that stretch reads MKGNSTLATTSKNITSGLHFGLVNISGNNESTLNCSQKPSDKHLD. Residues N4, N13, N24, N29, and N34 are each glycosylated (N-linked (GlcNAc...) asparagine). Intrachain disulfides connect C35–C290 and C117–C195. Residues 46-70 form a helical membrane-spanning segment; the sequence is AIPILYYIIFVIGFLVNIVVVTLFC. Over 71 to 80 the chain is Cytoplasmic; it reads CQKGPKKVSS. Residues 81-104 traverse the membrane as a helical segment; it reads IYIFNLAVADLLLLATLPLWATYY. The angiotensin II site is built by Y103 and Y104. Over 105 to 114 the chain is Extracellular; the sequence is SYRYDWLFGP. The helical transmembrane segment at 115–140 threads the bilayer; it reads VMCKVFGSFLTLNMFASIFFITCMSV. Topologically, residues 141 to 159 are cytoplasmic; that stretch reads DRYQSVIYPFLSQRRNPWQ. A helical membrane pass occupies residues 160-181; the sequence is ASYIVPLVWCMACLSSLPTFYF. 3 residues coordinate angiotensin II: R182, Y204, and K215. The Extracellular portion of the chain corresponds to 182-206; that stretch reads RDVRTIEYLGVNACIMAFPPEKYAQ. A helical transmembrane segment spans residues 207 to 232; sequence WSAGIALMKNILGFIIPLIFIATCYF. The Cytoplasmic segment spans residues 233–257; that stretch reads GIRKHLLKTNSYGKNRITRDQVLKM. The helical transmembrane segment at 258–281 threads the bilayer; the sequence is AAAVVLAFIICWLPFHVLTFLDAL. An angiotensin II-binding site is contributed by D279. At 282–294 the chain is on the extracellular side; sequence AWMGVINSCEVIA. Residues 295 to 320 form a helical membrane-spanning segment; sequence VIDLALPFAILLGFTNSCVNPFLYCF. D297 contributes to the angiotensin II binding site. At 321–363 the chain is on the cytoplasmic side; it reads VGNRFQQKLRSVFRVPITWLQGKRESMSCRKSSSLREMETFVS. Positions 324 to 333 are helix VIII; it reads RFQQKLRSVF.

This sequence belongs to the G-protein coupled receptor 1 family. In terms of assembly, interacts with MTUS1. As to expression, in adult, highly expressed in myometrium with lower levels in adrenal gland and fallopian tube. Expressed in the cerebellum. Very highly expressed in fetal kidney and intestine.

The protein resides in the cell membrane. Receptor for angiotensin II, a vasoconstricting peptide. Signals primarily via a non-canonical G-protein- and beta-arrestin independent pathways. Cooperates with MTUS1 to inhibit ERK2 activation and cell proliferation. In Homo sapiens (Human), this protein is Type-2 angiotensin II receptor.